The primary structure comprises 79 residues: uncharacterized protein (79 aa).

The disordered stretch occupies residues 51-79 (PAQFPKVQRPPTLLGGKNTSTQTTLHPVI). The span at 67–79 (KNTSTQTTLHPVI) shows a compositional bias: polar residues.

This is an uncharacterized protein from Homo sapiens (Human).